The primary structure comprises 759 residues: Rho GTPase-activating protein 26 (759 aa).

A BAR domain is found at 7-262; sequence EFSDCYLDSP…MKENPHEHLA (256 aa). The region spanning 265 to 369 is the PH domain; the sequence is PYTMEGYLYV…WMEAMDGREP (105 aa). A Rho-GAP domain is found at 383 to 568; that stretch reads AQLDNIGFSI…IIIENYEKMF (186 aa). Residues 578-701 form a disordered region; sequence NSQLHLSRKR…STSSDSSPVS (124 aa). Basic and acidic residues predominate over residues 608-617; the sequence is HNTEKEEKRN. Residues 618-637 show a composition bias toward low complexity; the sequence is SVNSSAESVSSSNANSSANS. A compositionally biased stretch (polar residues) spans 638 to 650; that stretch reads TCTQCSNMNNLNA. Low complexity predominate over residues 679 to 701; it reads PMFSAPSSPMPTSSTSSDSSPVS. In terms of domain architecture, SH3 spans 701–759; the sequence is SVPRKAKALYACKAEHDSELSFSAGTVFDNVYPSQEPGWLEGILNGKTGLIPENYVEFL.

Its subcellular location is the cell junction. It localises to the focal adhesion. The protein resides in the cytoplasm. The protein localises to the cytoskeleton. It is found in the endosome membrane. Functionally, GTPase-activating protein for rhoa and cdc42. In Xenopus tropicalis (Western clawed frog), this protein is Rho GTPase-activating protein 26 (arhgap26).